The chain runs to 539 residues: GMP synthase [glutamine-hydrolyzing] (539 aa).

One can recognise a Glutamine amidotransferase type-1 domain in the interval 4-202 (KILILDFGSQ…VLQIAGAKPD (199 aa)). The active-site Nucleophile is C81. Residues H176 and E178 contribute to the active site. Residues 203–395 (WIMKNHIEEA…LGLPPEMVYR (193 aa)) enclose the GMPS ATP-PPase domain. 230–236 (SGGVDSS) serves as a coordination point for ATP.

As to quaternary structure, homodimer.

The catalysed reaction is XMP + L-glutamine + ATP + H2O = GMP + L-glutamate + AMP + diphosphate + 2 H(+). Its pathway is purine metabolism; GMP biosynthesis; GMP from XMP (L-Gln route): step 1/1. Functionally, catalyzes the synthesis of GMP from XMP. The protein is GMP synthase [glutamine-hydrolyzing] of Burkholderia orbicola (strain AU 1054).